The primary structure comprises 309 residues: Protein FdhE (309 aa).

This sequence belongs to the FdhE family.

The protein resides in the cytoplasm. Functionally, necessary for formate dehydrogenase activity. This chain is Protein FdhE, found in Salmonella choleraesuis (strain SC-B67).